The chain runs to 277 residues: Alternative cytochrome c oxidase subunit 2 (277 aa).

The Periplasmic segment spans residues 1 to 40; it reads MAVALILLLIAIGSVLFHLFSPWWWTPIATNWGYIDDTIN. The helical transmembrane segment at 41–61 threads the bilayer; it reads ITFWITGFVFTAVILFMAYCV. The Cytoplasmic portion of the chain corresponds to 62 to 83; that stretch reads FRFHHKEGRQAAYNPENKKLEW. The helical transmembrane segment at 84-104 threads the bilayer; it reads WLSVGTGVGVAAMLAPGLVVW. Residues 105–277 are Periplasmic-facing; that stretch reads HQFVTVPADA…VRAKYNSGDD (173 aa). Histidine 190, cysteine 225, cysteine 229, and histidine 233 together coordinate Cu cation.

It belongs to the cytochrome c oxidase subunit 2 family.

The protein localises to the cell membrane. The catalysed reaction is 4 Fe(II)-[cytochrome c] + O2 + 8 H(+)(in) = 4 Fe(III)-[cytochrome c] + 2 H2O + 4 H(+)(out). Functionally, cytochrome c oxidase is the component of the respiratory chain that catalyzes the reduction of oxygen to water. Subunits 1-3 form the functional core of the enzyme complex. Subunit 2 transfers the electrons from cytochrome c via its binuclear copper A center to the bimetallic center of the catalytic subunit 1. The polypeptide is Alternative cytochrome c oxidase subunit 2 (coxM) (Bradyrhizobium diazoefficiens (strain JCM 10833 / BCRC 13528 / IAM 13628 / NBRC 14792 / USDA 110)).